The sequence spans 1169 residues: Transcription-repair-coupling factor (1169 aa).

Residues 634–795 (DMERERPMDR…MLGVRDLSVI (162 aa)) enclose the Helicase ATP-binding domain. 647 to 654 (GDVGYGKT) is a binding site for ATP. The short motif at 748 to 751 (DEEQ) is the DEEQ box element. Residues 809–970 (VLEQNSNFIK…GFKIAMRDLN (162 aa)) form the Helicase C-terminal domain.

It in the N-terminal section; belongs to the UvrB family. The protein in the C-terminal section; belongs to the helicase family. RecG subfamily.

Its subcellular location is the cytoplasm. Its function is as follows. Couples transcription and DNA repair by recognizing RNA polymerase (RNAP) stalled at DNA lesions. Mediates ATP-dependent release of RNAP and its truncated transcript from the DNA, and recruitment of nucleotide excision repair machinery to the damaged site. This chain is Transcription-repair-coupling factor, found in Staphylococcus haemolyticus (strain JCSC1435).